The following is a 193-amino-acid chain: ATP-dependent Clp protease proteolytic subunit 2 (193 aa).

Residue S98 is the Nucleophile of the active site. H123 is a catalytic residue.

This sequence belongs to the peptidase S14 family. As to quaternary structure, fourteen ClpP subunits assemble into 2 heptameric rings which stack back to back to give a disk-like structure with a central cavity, resembling the structure of eukaryotic proteasomes.

The protein resides in the cytoplasm. It catalyses the reaction Hydrolysis of proteins to small peptides in the presence of ATP and magnesium. alpha-casein is the usual test substrate. In the absence of ATP, only oligopeptides shorter than five residues are hydrolyzed (such as succinyl-Leu-Tyr-|-NHMec, and Leu-Tyr-Leu-|-Tyr-Trp, in which cleavage of the -Tyr-|-Leu- and -Tyr-|-Trp bonds also occurs).. Its function is as follows. Cleaves peptides in various proteins in a process that requires ATP hydrolysis. Has a chymotrypsin-like activity. Plays a major role in the degradation of misfolded proteins. The polypeptide is ATP-dependent Clp protease proteolytic subunit 2 (Bacillus anthracis).